Consider the following 97-residue polypeptide: Scorpine-like peptide Ev37 (97 aa).

The N-terminal stretch at 1 to 19 is a signal peptide; the sequence is MNSKLTVIVLLALITIASC. A BetaSPN-type CS-alpha/beta domain is found at 55-95; sequence QNLCAFNVDTVGMCDADCKRQGKAKGVCHGTKCKCDVELSY. Disulfide bonds link Cys58–Cys82, Cys68–Cys87, and Cys72–Cys89.

This sequence belongs to the long chain scorpion toxin family. Class 3 subfamily. Expressed by the venom gland.

It is found in the secreted. In terms of biological role, selectively inhibits Kv1.3/KCNA3 channel (IC(50)=0.95 uM). Both N-terminal and C-terminal domains are likely involved in the interaction with Kv1.3/KCNA3, since neither its N-terminal domain (1-36) nor its C-terminal domain (37-78) block Kv1.3/KCNA3 channel. The protein is Scorpine-like peptide Ev37 of Euscorpiops validus (Scorpion).